Here is a 181-residue protein sequence, read N- to C-terminus: Trans-acting factor D (181 aa).

Functionally, plays a role in 2-micron plasmid partitioning. Antagonizes transcriptional repression of recombinase FLP by REP1-REP2. Regulates both stability and copy number of the plasmid by blocking the formation of the REP1-REP2 repressor complex. The protein is Trans-acting factor D of Saccharomyces cerevisiae (strain ATCC 204508 / S288c) (Baker's yeast).